A 974-amino-acid chain; its full sequence is Membrane-associated phosphatidylinositol transfer protein 3 (974 aa).

Residues Ser30, Ser31, Ser109, Ser295, Ser298, Ser321, Ser343, and Ser495 each carry the phosphoserine modification. The interval 310-347 (CSLASSKRLSKSNVDVSSGVEDEDPKRPLPRKQSDSST) is disordered. Residues 312–325 (LASSKRLSKSNVDV) are compositionally biased toward polar residues. Positions 390–594 (FDFDVSDFFL…VAFILRQVMR (205 aa)) constitute a DDHD domain. The interval 497-535 (PLLDAPASPPQAPRFQRTERRLSKGSSHSDSSESSDSLA) is disordered. The span at 520 to 533 (KGSSHSDSSESSDS) shows a compositional bias: low complexity. 4 positions are modified to phosphoserine: Ser612, Ser907, Ser928, and Ser946. A disordered region spans residues 927-974 (MSVQQPDPPAANPKPERAQSQPESDKDHERPLPALSWARGPPKFESVP).

Belongs to the PtdIns transfer protein family. PI transfer class IIA subfamily. In terms of assembly, interacts with PTK2B via its C-terminus.

Its subcellular location is the endomembrane system. In terms of biological role, catalyzes the transfer of phosphatidylinositol and phosphatidylcholine between membranes (in vitro). Binds calcium ions. This Mus musculus (Mouse) protein is Membrane-associated phosphatidylinositol transfer protein 3 (Pitpnm3).